The following is a 1275-amino-acid chain: Surfactin synthase subunit 3 (1275 aa).

The Carrier domain maps to 968–1043 (GPRNEMEETI…GISAYLKNGG (76 aa)). Position 1003 is an O-(pantetheine 4'-phosphoryl)serine (S1003). The interval 1059–1271 (QIIFAFPPVL…ILLEFLNTQT (213 aa)) is thioesterase. Active-site residues include S1120, D1147, and H1247.

Belongs to the ATP-dependent AMP-binding enzyme family. Pantetheine 4'-phosphate serves as cofactor.

The protein operates within antibiotic biosynthesis; surfactin biosynthesis. In terms of biological role, probably activates a leucine. In Bacillus subtilis (strain 168), this protein is Surfactin synthase subunit 3 (srfAC).